Reading from the N-terminus, the 89-residue chain is Small ribosomal subunit protein uS15 (89 aa).

The protein belongs to the universal ribosomal protein uS15 family. In terms of assembly, part of the 30S ribosomal subunit. Forms a bridge to the 50S subunit in the 70S ribosome, contacting the 23S rRNA.

Its function is as follows. One of the primary rRNA binding proteins, it binds directly to 16S rRNA where it helps nucleate assembly of the platform of the 30S subunit by binding and bridging several RNA helices of the 16S rRNA. In terms of biological role, forms an intersubunit bridge (bridge B4) with the 23S rRNA of the 50S subunit in the ribosome. The polypeptide is Small ribosomal subunit protein uS15 (Prochlorococcus marinus (strain MIT 9215)).